Here is a 434-residue protein sequence, read N- to C-terminus: Trigger factor (434 aa).

Positions 160 to 245 (GDKVKMNFVG…LTEVLAANLP (86 aa)) constitute a PPIase FKBP-type domain.

It belongs to the FKBP-type PPIase family. Tig subfamily.

It localises to the cytoplasm. The catalysed reaction is [protein]-peptidylproline (omega=180) = [protein]-peptidylproline (omega=0). Involved in protein export. Acts as a chaperone by maintaining the newly synthesized protein in an open conformation. Functions as a peptidyl-prolyl cis-trans isomerase. The chain is Trigger factor from Shewanella sp. (strain ANA-3).